The sequence spans 280 residues: Large ribosomal subunit protein uL2 (280 aa).

Disordered stretches follow at residues 1–47 and 224–280; these read MAIR…NVHG and VVMN…SKKR. A compositionally biased stretch (basic and acidic residues) spans 23-33; the sequence is EITRSTPEKSL. Over residues 37–47 the composition is skewed to basic residues; sequence LPKKGGRNVHG. A compositionally biased stretch (polar residues) spans 258–268; sequence RNPNRYSNNMI. The segment covering 270 to 280 has biased composition (basic residues); sequence QRRRTNKSKKR.

It belongs to the universal ribosomal protein uL2 family. Part of the 50S ribosomal subunit. Forms a bridge to the 30S subunit in the 70S ribosome.

Functionally, one of the primary rRNA binding proteins. Required for association of the 30S and 50S subunits to form the 70S ribosome, for tRNA binding and peptide bond formation. It has been suggested to have peptidyltransferase activity; this is somewhat controversial. Makes several contacts with the 16S rRNA in the 70S ribosome. This Corynebacterium diphtheriae (strain ATCC 700971 / NCTC 13129 / Biotype gravis) protein is Large ribosomal subunit protein uL2.